A 159-amino-acid chain; its full sequence is Vesicle transport protein SFT2B (159 aa).

An N-acetylmethionine modification is found at Met1. Over 1 to 36 (MDKLKKVLSGQDTEDRSGLSEVVEASSLSWGTRIKG) the chain is Cytoplasmic. A Phosphoserine modification is found at Ser9. The chain crosses the membrane as a helical span at residues 37–57 (FIACFALGILCSVLGTLLLWV). Residues 58 to 63 (PRKGLG) lie on the Lumenal side of the membrane. Residues 64–84 (LFAVFYTLGNIMSIGSTVFLM) form a helical membrane-spanning segment. Residues 85 to 98 (GPLKQLKRMFEPTR) are Cytoplasmic-facing. Residues 99–119 (LIATILVLLCFALTLCSAFLW) traverse the membrane as a helical segment. Residues 120-122 (NKG) lie on the Lumenal side of the membrane. Residues 123–143 (LALIFCILQSLALTWYSLSYI) form a helical membrane-spanning segment. The Cytoplasmic segment spans residues 144-159 (PYARDAVKKCFAVCLA).

It belongs to the SFT2 family.

It localises to the membrane. Its function is as follows. May be involved in fusion of retrograde transport vesicles derived from an endocytic compartment with the Golgi complex. The polypeptide is Vesicle transport protein SFT2B (Mus musculus (Mouse)).